Consider the following 99-residue polypeptide: Acylphosphatase (99 aa).

Residues 5–97 (IRQVMISGRV…QPGERFSILS (93 aa)) enclose the Acylphosphatase-like domain. Residues Arg-20 and Asn-38 contribute to the active site.

The protein belongs to the acylphosphatase family.

It catalyses the reaction an acyl phosphate + H2O = a carboxylate + phosphate + H(+). This Rhodopseudomonas palustris (strain ATCC BAA-98 / CGA009) protein is Acylphosphatase (acyP).